The sequence spans 87 residues: Cyclin-dependent kinases regulatory subunit 1 (87 aa).

This sequence belongs to the CKS family. As to quaternary structure, interacts with CDKA-1. Interacts with CDKB1-1, CDKB1-2 and CDKB2-1. Interacts with CYCD2-1 and At4g14310.

Its function is as follows. Associates with cyclin-dependent kinases (CDKs) and plays an essential role in the regulation of the cell cycle that affects plant growth rate. May inhibit both the G1/S and G2/M phases. This Arabidopsis thaliana (Mouse-ear cress) protein is Cyclin-dependent kinases regulatory subunit 1 (CKS1).